A 430-amino-acid polypeptide reads, in one-letter code: MNVKMEKIEENVVKLEITVEADKFNESMKKAFAKNAKKFNIPGFRKGKAPMNIIKKYYGEGVFYEDAMSFCCESTYPDALKENNVNPVDYPKIEVVQIGEGKEFIYTAEVTVFPEVKLGEYKGVEVKKNTYDVKEEDIEQELKNMQQKDARIETKENGSIENGNIAIIDFKGFVDGKEFEGGEGQDYQLEIGSGTFIDNFEEQLIGLNAGDSKEVNVKFPEEYGIDDLNGKEAVFKVTVKEIKVKEIPELDDEFAKEVSEFDTLDEVKEDIRNKKQEANKLREEREFEEAVLEAVCSNTEINIPEVMVEKEVDNMIRDLETRLKYQGLDLETYYKYTNNDEQKVREYMRETSEKKVKADLVITEIAKVEKVEASDEEIKEKATEIAKQYGSDDVEKMAKIILDGQKEYLKMQIVNEKVMKMLVDSSKIIA.

Residues 163–248 (GNIAIIDFKG…VKEIKVKEIP (86 aa)) form the PPIase FKBP-type domain.

This sequence belongs to the FKBP-type PPIase family. Tig subfamily.

The protein resides in the cytoplasm. The catalysed reaction is [protein]-peptidylproline (omega=180) = [protein]-peptidylproline (omega=0). Involved in protein export. Acts as a chaperone by maintaining the newly synthesized protein in an open conformation. Functions as a peptidyl-prolyl cis-trans isomerase. The protein is Trigger factor of Clostridium kluyveri (strain NBRC 12016).